Reading from the N-terminus, the 307-residue chain is Putative lipid kinase SERP0390 (307 aa).

The 137-residue stretch at 3–139 (QPYNHGVLFY…YDVLKVNDLY (137 aa)) folds into the DAGKc domain. ATP is bound by residues Ser-44, 74–80 (GDGTLNE), and Thr-101. Positions 220, 223, and 225 each coordinate Mg(2+). The active-site Proton acceptor is Glu-281.

Belongs to the diacylglycerol/lipid kinase family. Mg(2+) is required as a cofactor.

Its function is as follows. May catalyze the ATP-dependent phosphorylation of lipids other than diacylglycerol (DAG). The polypeptide is Putative lipid kinase SERP0390 (Staphylococcus epidermidis (strain ATCC 35984 / DSM 28319 / BCRC 17069 / CCUG 31568 / BM 3577 / RP62A)).